The sequence spans 248 residues: ATP synthase subunit a (248 aa).

The next 6 membrane-spanning stretches (helical) occupy residues 27-47, 83-103, 113-133, 142-162, 192-212, and 215-235; these read FTNSSAYMFGTVALIAILMLV, FFPLVFSLFMFIAVSNLIGIV, LIVTVALALLVFFTVLIYGFS, LFVPSGVPIYILPLVVFIEVI, FVAMLGALGVVGWFGAVLPLG, and IALTALELLVAFLQAYVFAIL.

Belongs to the ATPase A chain family. F-type ATPases have 2 components, CF(1) - the catalytic core - and CF(0) - the membrane proton channel. CF(1) has five subunits: alpha(3), beta(3), gamma(1), delta(1), epsilon(1). CF(0) has four main subunits: a, b, b' and c.

It is found in the cell inner membrane. Key component of the proton channel; it plays a direct role in the translocation of protons across the membrane. This Rhodopseudomonas palustris (strain ATCC BAA-98 / CGA009) protein is ATP synthase subunit a.